The sequence spans 387 residues: S-adenosylmethionine synthase (387 aa).

An ATP-binding site is contributed by His15. Asp17 contacts Mg(2+). Position 43 (Glu43) interacts with K(+). Glu56 and Gln99 together coordinate L-methionine. The interval 99–109 (QSPDIAQGVNR) is flexible loop. Residues 166–168 (DAK), 232–233 (RF), Asp241, 247–248 (RK), Ala264, and Lys268 each bind ATP. Asp241 is an L-methionine binding site. Position 272 (Lys272) interacts with L-methionine.

It belongs to the AdoMet synthase family. As to quaternary structure, homotetramer; dimer of dimers. It depends on Mg(2+) as a cofactor. Requires K(+) as cofactor.

It is found in the cytoplasm. It carries out the reaction L-methionine + ATP + H2O = S-adenosyl-L-methionine + phosphate + diphosphate. Its pathway is amino-acid biosynthesis; S-adenosyl-L-methionine biosynthesis; S-adenosyl-L-methionine from L-methionine: step 1/1. In terms of biological role, catalyzes the formation of S-adenosylmethionine (AdoMet) from methionine and ATP. The overall synthetic reaction is composed of two sequential steps, AdoMet formation and the subsequent tripolyphosphate hydrolysis which occurs prior to release of AdoMet from the enzyme. The chain is S-adenosylmethionine synthase from Nitrosomonas europaea (strain ATCC 19718 / CIP 103999 / KCTC 2705 / NBRC 14298).